Consider the following 244-residue polypeptide: NAD(P)H-quinone oxidoreductase subunit K (244 aa).

[4Fe-4S] cluster contacts are provided by Cys-60, Cys-61, Cys-125, and Cys-156. Residues 213–244 form a disordered region; it reads KSEKSIESSKLNPVEESSENIYETNSIDEVIK. The span at 231–244 shows a compositional bias: polar residues; that stretch reads ENIYETNSIDEVIK.

This sequence belongs to the complex I 20 kDa subunit family. NDH-1 can be composed of about 15 different subunits; different subcomplexes with different compositions have been identified which probably have different functions. It depends on [4Fe-4S] cluster as a cofactor.

The protein localises to the cellular thylakoid membrane. The enzyme catalyses a plastoquinone + NADH + (n+1) H(+)(in) = a plastoquinol + NAD(+) + n H(+)(out). It catalyses the reaction a plastoquinone + NADPH + (n+1) H(+)(in) = a plastoquinol + NADP(+) + n H(+)(out). Its function is as follows. NDH-1 shuttles electrons from an unknown electron donor, via FMN and iron-sulfur (Fe-S) centers, to quinones in the respiratory and/or the photosynthetic chain. The immediate electron acceptor for the enzyme in this species is believed to be plastoquinone. Couples the redox reaction to proton translocation, and thus conserves the redox energy in a proton gradient. Cyanobacterial NDH-1 also plays a role in inorganic carbon-concentration. The sequence is that of NAD(P)H-quinone oxidoreductase subunit K from Prochlorococcus marinus subsp. pastoris (strain CCMP1986 / NIES-2087 / MED4).